The sequence spans 921 residues: Collagen alpha-1(IX) chain (921 aa).

A signal peptide spans 1–23 (MKNFWKISVFFCVCSCLGPWVSA). The nonhelical region (NC4) stretch occupies residues 24 to 268 (TLKRRARFPA…ITTSQTTDER (245 aa)). 2 cysteine pairs are disulfide-bonded: C44–C242 and C198–C252. The region spanning 50-244 (GQDDLPGFDL…LQWMLIHCDP (195 aa)) is the Laminin G-like domain. The Zn(2+) site is built by D213, D215, and H253. 2 disordered regions span residues 253 to 759 (HELP…APTD) and 783 to 921 (RPDT…GPDK). Collagen-like domains follow at residues 269–325 (GPPG…PGAD), 326–356 (GLTG…GFPG), 358–403 (GIPG…GTIG), 416–472 (PPGR…GLRG), 473–512 (ITGI…PPGE), 604–656 (GKPG…LPGP), 657–711 (PGLP…PGEP), and 712–755 (GLRG…PPGR). The segment at 269 to 405 (GPPGEQGPPG…PGPSGTIGFH (137 aa)) is triple-helical region (COL3). Composition is skewed to pro residues over residues 273–285 (EQGP…PPGV) and 298–310 (KGPP…PGDP). Over residues 368-383 (TTGLPGELGRVGPIGD) the composition is skewed to low complexity. Residues 387–398 (RGPPGPPGPPGP) are compositionally biased toward pro residues. The tract at residues 406 to 417 (DGDPLCPNSCPP) is nonhelical region (NC3). The tract at residues 418–756 (GRSGYPGLPG…PGIQGPPGRA (339 aa)) is triple-helical region (COL2). Residues 479–489 (DKGEKGARGFD) are compositionally biased toward basic and acidic residues. 2 stretches are compositionally biased toward low complexity: residues 594-632 (PGKP…PVGP) and 639-650 (PGKLGSVGSPGL). The nonhelical region (NC2) stretch occupies residues 757 to 786 (PTDQHIKQVCMRVVQEHFVEMAASLKRPDT). The triple-helical region (COL1) stretch occupies residues 787–901 (GASGLPGRPG…PGPPGPPGFC (115 aa)). One can recognise a Collagen-like 9 domain in the interval 790–847 (GLPGRPGPPGPPGPPGENGFPGQMGIRGLPGIKGPPGALGLRGPKGDLGEKGERGPPG). A compositionally biased stretch (pro residues) spans 794–804 (RPGPPGPPGPP). A compositionally biased stretch (basic and acidic residues) spans 833–845 (PKGDLGEKGERGP). Over residues 888–900 (VPGPPGPPGPPGF) the composition is skewed to pro residues. Residues 902–921 (EPASCTLQSGQRAFSKGPDK) form a nonhelical region (NC1) region.

This sequence belongs to the fibril-associated collagens with interrupted helices (FACIT) family. Heterotrimer of an alpha 1(IX), an alpha 2(IX) and an alpha 3(IX) chain. Post-translationally, covalently linked to the telopeptides of type II collagen by lysine-derived cross-links. In terms of processing, prolines at the third position of the tripeptide repeating unit (G-X-Y) are hydroxylated in some or all of the chains.

The protein localises to the secreted. It localises to the extracellular space. The protein resides in the extracellular matrix. In terms of biological role, structural component of hyaline cartilage and vitreous of the eye. In Mus musculus (Mouse), this protein is Collagen alpha-1(IX) chain (Col9a1).